Here is a 146-residue protein sequence, read N- to C-terminus: Protein archease (146 aa).

Ca(2+) is bound by residues Asp-16, Asp-145, and Ile-146.

It belongs to the archease family.

Its function is as follows. Activates the tRNA-splicing ligase complex by facilitating the enzymatic turnover of catalytic subunit RtcB. Acts by promoting the guanylylation of RtcB, a key intermediate step in tRNA ligation. Can also alter the NTP specificity of RtcB such that ATP, dGTP or ITP is used efficiently. The sequence is that of Protein archease from Methanosarcina mazei (strain ATCC BAA-159 / DSM 3647 / Goe1 / Go1 / JCM 11833 / OCM 88) (Methanosarcina frisia).